A 179-amino-acid polypeptide reads, in one-letter code: ATP synthase subunit b, chloroplastic (179 aa).

Residues 28–46 form a helical membrane-spanning segment; it reads LLNILALVAILVYTGKDFL.

This sequence belongs to the ATPase B chain family. As to quaternary structure, F-type ATPases have 2 components, F(1) - the catalytic core - and F(0) - the membrane proton channel. F(1) has five subunits: alpha(3), beta(3), gamma(1), delta(1), epsilon(1). F(0) has four main subunits: a(1), b(1), b'(1) and c(10-14). The alpha and beta chains form an alternating ring which encloses part of the gamma chain. F(1) is attached to F(0) by a central stalk formed by the gamma and epsilon chains, while a peripheral stalk is formed by the delta, b and b' chains.

The protein resides in the plastid. The protein localises to the chloroplast thylakoid membrane. Its function is as follows. F(1)F(0) ATP synthase produces ATP from ADP in the presence of a proton or sodium gradient. F-type ATPases consist of two structural domains, F(1) containing the extramembraneous catalytic core and F(0) containing the membrane proton channel, linked together by a central stalk and a peripheral stalk. During catalysis, ATP synthesis in the catalytic domain of F(1) is coupled via a rotary mechanism of the central stalk subunits to proton translocation. In terms of biological role, component of the F(0) channel, it forms part of the peripheral stalk, linking F(1) to F(0). The sequence is that of ATP synthase subunit b, chloroplastic from Thalassiosira pseudonana (Marine diatom).